Consider the following 507-residue polypeptide: Glutamyl-tRNA(Gln) amidotransferase subunit A, mitochondrial (507 aa).

The segment at 29 to 51 (THPPEPIPPPPPPAPSSSPSPKQ) is disordered. A compositionally biased stretch (pro residues) spans 31 to 46 (PPEPIPPPPPPAPSSS). Residues lysine 57 and serine 135 each act as charge relay system in the active site. The active-site Acyl-ester intermediate is serine 159.

This sequence belongs to the amidase family. GatA subfamily. As to quaternary structure, subunit of the heterotrimeric GatCAB amidotransferase (AdT) complex, composed of A, B and C subunits.

Its subcellular location is the mitochondrion. The catalysed reaction is L-glutamyl-tRNA(Gln) + L-glutamine + ATP + H2O = L-glutaminyl-tRNA(Gln) + L-glutamate + ADP + phosphate + H(+). Functionally, allows the formation of correctly charged Gln-tRNA(Gln) through the transamidation of misacylated Glu-tRNA(Gln) in the mitochondria. The reaction takes place in the presence of glutamine and ATP through an activated gamma-phospho-Glu-tRNA(Gln). This is Glutamyl-tRNA(Gln) amidotransferase subunit A, mitochondrial from Podospora anserina (strain S / ATCC MYA-4624 / DSM 980 / FGSC 10383) (Pleurage anserina).